Reading from the N-terminus, the 61-residue chain is Three-finger hemachatoxin (61 aa).

4 disulfides stabilise this stretch: cysteine 3/cysteine 22, cysteine 15/cysteine 39, cysteine 43/cysteine 54, and cysteine 55/cysteine 60.

It belongs to the three-finger toxin family. Short-chain subfamily. Type IB cytotoxin sub-subfamily. In terms of tissue distribution, expressed by the venom gland.

The protein localises to the secreted. Its function is as follows. This protein lyses red blood cells and has cardiotoxic and hypotensive activities. In Hemachatus haemachatus (Rinkhals), this protein is Three-finger hemachatoxin.